Here is a 264-residue protein sequence, read N- to C-terminus: Undecaprenyl-diphosphatase (264 aa).

6 helical membrane passes run 41–61, 82–102, 106–126, 140–160, 213–233, and 244–264; these read NLAF…VILW, YVIN…FFKD, AIFG…AALL, ISMK…LPGL, IPAL…CLAC, and KLIY…ITQL.

This sequence belongs to the UppP family.

Its subcellular location is the cell inner membrane. It carries out the reaction di-trans,octa-cis-undecaprenyl diphosphate + H2O = di-trans,octa-cis-undecaprenyl phosphate + phosphate + H(+). In terms of biological role, catalyzes the dephosphorylation of undecaprenyl diphosphate (UPP). Confers resistance to bacitracin. The protein is Undecaprenyl-diphosphatase of Bacteroides thetaiotaomicron (strain ATCC 29148 / DSM 2079 / JCM 5827 / CCUG 10774 / NCTC 10582 / VPI-5482 / E50).